The following is a 380-amino-acid chain: Protein kinase ORF15 (380 aa).

A Protein kinase domain is found at 93–371; that stretch reads FIPVKVAGCL…LLIAQLTKFI (279 aa). Lys-118 is an ATP binding site. The active-site Proton acceptor is the Asp-217.

It belongs to the protein kinase superfamily. Ser/Thr protein kinase family.

It catalyses the reaction L-seryl-[protein] + ATP = O-phospho-L-seryl-[protein] + ADP + H(+). The enzyme catalyses L-threonyl-[protein] + ATP = O-phospho-L-threonyl-[protein] + ADP + H(+). The polypeptide is Protein kinase ORF15 (ORF15) (Ictalurid herpesvirus 1 (strain Auburn) (IcHV-1)).